A 292-amino-acid chain; its full sequence is NAD kinase (292 aa).

The active-site Proton acceptor is the aspartate 73. NAD(+) is bound by residues 73–74, 147–148, histidine 158, arginine 175, aspartate 177, 188–193, and glutamine 248; these read DG, NE, and TGYSLS.

Belongs to the NAD kinase family. It depends on a divalent metal cation as a cofactor.

The protein localises to the cytoplasm. It carries out the reaction NAD(+) + ATP = ADP + NADP(+) + H(+). Functionally, involved in the regulation of the intracellular balance of NAD and NADP, and is a key enzyme in the biosynthesis of NADP. Catalyzes specifically the phosphorylation on 2'-hydroxyl of the adenosine moiety of NAD to yield NADP. The chain is NAD kinase from Buchnera aphidicola subsp. Baizongia pistaciae (strain Bp).